Consider the following 371-residue polypeptide: Opine oxidase subunit B (371 aa).

In terms of assembly, heterodimer of a subunit A and a subunit B.

It functions in the pathway opine metabolism; octopine degradation. In terms of biological role, oxidative cleavage of octopine into L-arginine and pyruvate. The protein is Opine oxidase subunit B (ooxB) of Agrobacterium tumefaciens (strain Ach5).